A 559-amino-acid polypeptide reads, in one-letter code: Actin-binding protein WASF1 (559 aa).

3 disordered regions span residues 170 to 202 (EDKR…DRRR), 304 to 383 (IENR…GVLH), and 412 to 490 (VHPL…HPST). Positions 182 to 202 (KNLDRPHEPEKVPRAPHDRRR) are enriched in basic and acidic residues. Residues 304–313 (IENRPQSPAT) show a composition bias toward polar residues. Positions 322-332 (PTPPPPPPPLP) are enriched in pro residues. The segment covering 333 to 346 (SALSTSSLRASMTS) has biased composition (low complexity). Residue Arg341 is modified to Asymmetric dimethylarginine; alternate. An Omega-N-methylarginine; alternate modification is found at Arg341. Composition is skewed to pro residues over residues 347-360 (TPPP…PPPA), 423-437 (LPPP…PPGI), and 460-477 (STAP…PPSQ). Ser489 carries the post-translational modification Phosphoserine. The 18-residue stretch at 497 to 514 (ARSVLLEAIRKGIQLRKV) folds into the WH2 domain.

This sequence belongs to the SCAR/WAVE family. Component of the WAVE1 complex composed of ABI2, CYFIP1 or CYFIP2, BRK1, NCKAP1 and WASF1/WAVE1. Within the complex, a heterodimer containing NCKAP1 and CYFIP1 interacts with a heterotrimer formed by WAVE1, ABI2 and BRK1. CYFIP2 binds to activated RAC1 which causes the complex to dissociate, releasing activated WASF1. The complex can also be activated by NCK1. Binds actin and the Arp2/3 complex. Interacts with BAIAP2. Interacts with SHANK3; the interaction mediates the association of SHANK3 with the WAVE1 complex. Interacts with ABI1 (via N-terminus). Interacts with SORBS2; this interaction greatly enhances phosphorylation by ABL1 and dephosphorylation by PTPN12 and might mediate partial to focal adhesion sites.

It localises to the cytoplasm. The protein resides in the cytoskeleton. The protein localises to the synapse. It is found in the cell junction. Its subcellular location is the focal adhesion. Its function is as follows. Downstream effector molecule involved in the transmission of signals from tyrosine kinase receptors and small GTPases to the actin cytoskeleton. Promotes formation of actin filaments. Part of the WAVE complex that regulates lamellipodia formation. The WAVE complex regulates actin filament reorganization via its interaction with the Arp2/3 complex. As component of the WAVE1 complex, required for BDNF-NTRK2 endocytic trafficking and signaling from early endosomes. Also involved in the regulation of mitochondrial dynamics. This chain is Actin-binding protein WASF1 (WASF1), found in Pongo abelii (Sumatran orangutan).